The following is a 628-amino-acid chain: tRNA uridine 5-carboxymethylaminomethyl modification enzyme MnmG (628 aa).

FAD is bound by residues 14–19 (GAGHAG), valine 126, and serine 181. 273-287 (GPRYCPSIEDKVVRF) lines the NAD(+) pocket. Residue glutamine 370 participates in FAD binding.

Belongs to the MnmG family. In terms of assembly, homodimer. Heterotetramer of two MnmE and two MnmG subunits. FAD is required as a cofactor.

Its subcellular location is the cytoplasm. Functionally, NAD-binding protein involved in the addition of a carboxymethylaminomethyl (cmnm) group at the wobble position (U34) of certain tRNAs, forming tRNA-cmnm(5)s(2)U34. This Bacillus licheniformis (strain ATCC 14580 / DSM 13 / JCM 2505 / CCUG 7422 / NBRC 12200 / NCIMB 9375 / NCTC 10341 / NRRL NRS-1264 / Gibson 46) protein is tRNA uridine 5-carboxymethylaminomethyl modification enzyme MnmG.